We begin with the raw amino-acid sequence, 340 residues long: Peroxisomal coenzyme A diphosphatase 1, peroxisomal (340 aa).

Residues Met1 to Arg7 constitute a peroxisome transit peptide. The Nudix hydrolase domain maps to Lys37–Glu199. Residues Gly77–Gly99 carry the Nudix box motif. The Mg(2+) site is built by Glu93 and Glu97.

The protein belongs to the Nudix hydrolase family. PCD1 subfamily. The cofactor is Mn(2+). It depends on Mg(2+) as a cofactor. In terms of processing, the size of the cleaved transit peptide can be of 7 or 8 residues.

Its subcellular location is the peroxisome. It catalyses the reaction CoA + H2O = (R)-4'-phosphopantetheine + adenosine 3',5'-bisphosphate + 2 H(+). The catalysed reaction is CoA-disulfide + H2O = 4'-phosphopantetheinyl-CoA disulfide + adenosine 3',5'-bisphosphate + 2 H(+). The enzyme catalyses 8-oxo-dGTP + H2O = 8-oxo-dGMP + diphosphate + H(+). It carries out the reaction 2-oxo-dATP + H2O = 2-oxo-dAMP + diphosphate + H(+). Its function is as follows. Diphosphatase (pyrophosphatase) with specificity for coenzyme A and CoA derivatives. Catalyzes the hydrolysis of the diphosphate linkage in CoA to give 3',5'-ADP and 4'-phosphopantetheine. Prefers oxidized CoA disulfide (CoASSCoA) over CoA as a substrate. May be required to remove potentially toxic oxidized CoA disulfide from peroxisomes to maintain the capacity for beta-oxidation of fatty acids. Can also hydrolyze 8-oxo-dGTP and 2-OH-dATP in vitro; therefore it may function as a sanitizing enzyme for oxidized nucleotides and may contribute to prevention of spontaneous mutagenesis due to the misincorporation of these oxidized nucleotides during DNA synthesis. Shows moderate activity in vitro with several short chain acyl-CoA esters and very low activity on 3'-dephospho-CoA while is not active with (deoxy)nucleoside 5'-triphosphates, nucleoside 5'-di- or monophosphates, diadenosine polyphosphates, nucleoside 5'-diphosphosugars, cytidine 5'-diphosphoalcohols, NAD(+), NADH, or FAD. The sequence is that of Peroxisomal coenzyme A diphosphatase 1, peroxisomal (PCD1) from Saccharomyces cerevisiae (strain ATCC 204508 / S288c) (Baker's yeast).